The chain runs to 330 residues: tRNA-modifying protein YgfZ (330 aa).

Positions 28 and 190 each coordinate folate.

Belongs to the tRNA-modifying YgfZ family.

The protein localises to the cytoplasm. In terms of biological role, folate-binding protein involved in regulating the level of ATP-DnaA and in the modification of some tRNAs. It is probably a key factor in regulatory networks that act via tRNA modification, such as initiation of chromosomal replication. The sequence is that of tRNA-modifying protein YgfZ from Yersinia enterocolitica serotype O:8 / biotype 1B (strain NCTC 13174 / 8081).